Reading from the N-terminus, the 209-residue chain is Large ribosomal subunit protein uL3 (209 aa).

The tract at residues 124-156 (KRHNFSGGQRTHGQSDRQRAPGSVGGSSDPSRV) is disordered.

The protein belongs to the universal ribosomal protein uL3 family. Part of the 50S ribosomal subunit. Forms a cluster with proteins L14 and L19.

In terms of biological role, one of the primary rRNA binding proteins, it binds directly near the 3'-end of the 23S rRNA, where it nucleates assembly of the 50S subunit. The polypeptide is Large ribosomal subunit protein uL3 (Pelodictyon phaeoclathratiforme (strain DSM 5477 / BU-1)).